The sequence spans 354 residues: UDP-N-acetylglucosamine--N-acetylmuramyl-(pentapeptide) pyrophosphoryl-undecaprenol N-acetylglucosamine transferase (354 aa).

UDP-N-acetyl-alpha-D-glucosamine contacts are provided by residues 12–14 (TGG), asparagine 124, arginine 163, serine 187, isoleucine 240, and glutamine 285.

The protein belongs to the glycosyltransferase 28 family. MurG subfamily.

The protein resides in the cell inner membrane. It carries out the reaction di-trans,octa-cis-undecaprenyl diphospho-N-acetyl-alpha-D-muramoyl-L-alanyl-D-glutamyl-meso-2,6-diaminopimeloyl-D-alanyl-D-alanine + UDP-N-acetyl-alpha-D-glucosamine = di-trans,octa-cis-undecaprenyl diphospho-[N-acetyl-alpha-D-glucosaminyl-(1-&gt;4)]-N-acetyl-alpha-D-muramoyl-L-alanyl-D-glutamyl-meso-2,6-diaminopimeloyl-D-alanyl-D-alanine + UDP + H(+). Its pathway is cell wall biogenesis; peptidoglycan biosynthesis. Cell wall formation. Catalyzes the transfer of a GlcNAc subunit on undecaprenyl-pyrophosphoryl-MurNAc-pentapeptide (lipid intermediate I) to form undecaprenyl-pyrophosphoryl-MurNAc-(pentapeptide)GlcNAc (lipid intermediate II). In Methylococcus capsulatus (strain ATCC 33009 / NCIMB 11132 / Bath), this protein is UDP-N-acetylglucosamine--N-acetylmuramyl-(pentapeptide) pyrophosphoryl-undecaprenol N-acetylglucosamine transferase.